Consider the following 441-residue polypeptide: Xylose isomerase (441 aa).

Active-site residues include His-99 and Asp-102. Positions 230, 266, 294, 305, 307, and 337 each coordinate Mn(2+).

The protein belongs to the xylose isomerase family. As to quaternary structure, homotetramer. Mn(2+) is required as a cofactor.

It localises to the cytoplasm. It carries out the reaction alpha-D-xylose = alpha-D-xylulofuranose. The polypeptide is Xylose isomerase (xylA) (Geobacillus stearothermophilus (Bacillus stearothermophilus)).